A 726-amino-acid polypeptide reads, in one-letter code: Catalase-peroxidase (726 aa).

Positions 1–33 (MSTSDDIHNTTATGKCPFHQGGHDQSAGAGTTT) are disordered. A cross-link (tryptophyl-tyrosyl-methioninium (Trp-Tyr) (with M-252)) is located at residues 105 to 226 (WHGAGTYRSI…LGATEMGLIY (122 aa)). His-106 serves as the catalytic Proton acceptor. A cross-link (tryptophyl-tyrosyl-methioninium (Tyr-Met) (with W-105)) is located at residues 226–252 (YVNPEGPDHSGEPLSAAAAIRATFGNM). Heme b is bound at residue His-267.

The protein belongs to the peroxidase family. Peroxidase/catalase subfamily. In terms of assembly, homodimer or homotetramer. The cofactor is heme b. Post-translationally, formation of the three residue Trp-Tyr-Met cross-link is important for the catalase, but not the peroxidase activity of the enzyme.

It catalyses the reaction H2O2 + AH2 = A + 2 H2O. The enzyme catalyses 2 H2O2 = O2 + 2 H2O. In terms of biological role, bifunctional enzyme with both catalase and broad-spectrum peroxidase activity. The protein is Catalase-peroxidase of Shigella boydii serotype 18 (strain CDC 3083-94 / BS512).